The chain runs to 128 residues: Fruiting body differentiation protein 16 (128 aa).

The N-terminal stretch at 1–19 (MLFSHIVFVALSVFGLVQA) is a signal peptide.

Its function is as follows. Plays a role in the regulation of fruiting body development. This Flammulina velutipes (Agaricus velutipes) protein is Fruiting body differentiation protein 16.